Consider the following 420-residue polypeptide: ATP-dependent Clp protease ATP-binding subunit ClpX (420 aa).

Positions lysine 4 to histidine 57 constitute a ClpX-type ZB domain. The Zn(2+) site is built by cysteine 16, cysteine 19, cysteine 38, and cysteine 41. Position 122 to 129 (proline 122 to leucine 129) interacts with ATP.

Belongs to the ClpX chaperone family. Component of the ClpX-ClpP complex. Forms a hexameric ring that, in the presence of ATP, binds to fourteen ClpP subunits assembled into a disk-like structure with a central cavity, resembling the structure of eukaryotic proteasomes.

Functionally, ATP-dependent specificity component of the Clp protease. It directs the protease to specific substrates. Can perform chaperone functions in the absence of ClpP. The chain is ATP-dependent Clp protease ATP-binding subunit ClpX from Leptospira interrogans serogroup Icterohaemorrhagiae serovar copenhageni (strain Fiocruz L1-130).